Consider the following 428-residue polypeptide: tRNA(Ile2) 2-agmatinylcytidine synthetase TiaS (428 aa).

The protein belongs to the TiaS family.

It is found in the cytoplasm. It catalyses the reaction cytidine(34) in tRNA(Ile2) + agmatine + ATP + H2O = 2-agmatinylcytidine(34) in tRNA(Ile2) + AMP + 2 phosphate + 2 H(+). Its function is as follows. ATP-dependent agmatine transferase that catalyzes the formation of 2-agmatinylcytidine (agm2C) at the wobble position (C34) of tRNA(Ile2), converting the codon specificity from AUG to AUA. This Methanosarcina acetivorans (strain ATCC 35395 / DSM 2834 / JCM 12185 / C2A) protein is tRNA(Ile2) 2-agmatinylcytidine synthetase TiaS.